The following is a 543-amino-acid chain: Kelch repeat and BTB domain-containing protein 4 (543 aa).

The BTB domain maps to 70-137; it reads ADVTISVEGR…IYHGTVKLRA (68 aa). A BACK domain is found at 172–264; the sequence is CLQVMWLADR…SLKEIGENVH (93 aa). 5 Kelch repeats span residues 264–310, 311–353, 356–403, 405–455, and 457–505; these read HIYL…KHGG, DLYV…SVPG, AIYS…NLNG, IYLL…VHKD, and VFIV…YVFR.

As to quaternary structure, component of the BCR(KBTBD4) E3 ubiquitin ligase complex, at least composed of CUL3, KBTBD4 and RBX1.

Functionally, substrate-specific adapter of a BCR (BTB-CUL3-RBX1) E3 ubiquitin ligase complex which targets CoREST corepressor complex components RCOR1, KDM1A/LSD1 and HDAC2 for proteasomal degradation. RCOR1 is likely to be the primary target while degradation of KDM1A and HDAC2 is likely due to their association with RCOR1. Also targets RCOR3, MIER2 and MIER3 for proteasomal degradation as well as associated proteins ZNF217 and RREB1. Degradation is dependent on the presence of an ELM2 domain in the target proteins. The protein is Kelch repeat and BTB domain-containing protein 4 (KBTBD4) of Macaca fascicularis (Crab-eating macaque).